A 511-amino-acid chain; its full sequence is Maturase K (511 aa).

The protein belongs to the intron maturase 2 family. MatK subfamily.

The protein resides in the plastid. It localises to the chloroplast. Usually encoded in the trnK tRNA gene intron. Probably assists in splicing its own and other chloroplast group II introns. This Paulownia tomentosa (Princess tree) protein is Maturase K.